A 430-amino-acid polypeptide reads, in one-letter code: Adenylosuccinate synthetase (430 aa).

Residues 12–18 and 40–42 each bind GTP; these read GDEGKGK and GHT. Aspartate 13 serves as the catalytic Proton acceptor. The Mg(2+) site is built by aspartate 13 and glycine 40. IMP contacts are provided by residues 13 to 16, 38 to 41, threonine 128, arginine 142, glutamine 223, threonine 238, and arginine 302; these read DEGK and NAGH. Residue histidine 41 is the Proton donor of the active site. 298 to 304 serves as a coordination point for substrate; the sequence is TTTGRPR. GTP is bound by residues arginine 304, 330 to 332, and 412 to 414; these read LLD and SVG.

Belongs to the adenylosuccinate synthetase family. As to quaternary structure, homodimer. The cofactor is Mg(2+).

It is found in the cytoplasm. It carries out the reaction IMP + L-aspartate + GTP = N(6)-(1,2-dicarboxyethyl)-AMP + GDP + phosphate + 2 H(+). It functions in the pathway purine metabolism; AMP biosynthesis via de novo pathway; AMP from IMP: step 1/2. Functionally, plays an important role in the de novo pathway of purine nucleotide biosynthesis. Catalyzes the first committed step in the biosynthesis of AMP from IMP. This chain is Adenylosuccinate synthetase, found in Listeria monocytogenes serotype 4a (strain HCC23).